A 54-amino-acid polypeptide reads, in one-letter code: Large ribosomal subunit protein bL33 (54 aa).

It belongs to the bacterial ribosomal protein bL33 family.

This Thermus thermophilus (strain ATCC BAA-163 / DSM 7039 / HB27) protein is Large ribosomal subunit protein bL33.